The chain runs to 405 residues: SPbeta prophage-derived uncharacterized protein YonJ (405 aa).

A coiled-coil region spans residues 72-101 (DESNNSLLELELKKVEIMEERKKLQAVKHE).

This Bacillus subtilis (strain 168) protein is SPbeta prophage-derived uncharacterized protein YonJ (yonJ).